The primary structure comprises 1218 residues: Chitin synthase 4 (1218 aa).

2 disordered regions span residues 1-93 (MAEP…PERN) and 132-190 (TVSS…RRQK). Basic and acidic residues predominate over residues 14–34 (TRDKSHSPYRESPSRRLRDVE). The N-linked (GlcNAc...) asparagine glycan is linked to N50. Polar residues-rich tracts occupy residues 71-80 (SNPNPMSQSD) and 133-142 (VSSGSTQQDT). Basic and acidic residues predominate over residues 175–190 (RKDTRNLTEEEKRRQK). An N-linked (GlcNAc...) asparagine glycan is attached at N180. The next 2 helical transmembrane spans lie at 200 to 220 (IWNIYCAVVTFWAPDCLLQCF) and 235 to 255 (VGLISIILLIAAFVGFLTFGF). 3 N-linked (GlcNAc...) asparagine glycosylation sites follow: N365, N404, and N426. A helical membrane pass occupies residues 487 to 507 (VVLYVSLVFILAIVAAKFFLA). 2 disordered regions span residues 548–570 (PKITDPASTVTGSDGRTSKRGSM) and 582–606 (YAVDRRSSRPPPTTMTSQSSNAKLL). The segment covering 553–562 (PASTVTGSDG) has biased composition (polar residues). N617, N903, and N1030 each carry an N-linked (GlcNAc...) asparagine glycan. 3 helical membrane-spanning segments follow: residues 1062–1082 (IGTLVLPAAISFTFYLIIISI), 1087–1107 (VPVIPLVLLALILGLPAILIV), and 1115–1135 (YILWMGIYLLSLPIWNFVLPA). The segment at 1188 to 1218 (QANGSVWNQQPPTRPPSGYGSMHGFEPYRDY) is disordered. Over residues 1189–1198 (ANGSVWNQQP) the composition is skewed to polar residues. N-linked (GlcNAc...) asparagine glycosylation occurs at N1190.

This sequence belongs to the chitin synthase family. Class IV subfamily. In terms of processing, maximal activity requires trypsin activation, suggesting a zymogenic nature.

It localises to the cell membrane. It carries out the reaction [(1-&gt;4)-N-acetyl-beta-D-glucosaminyl](n) + UDP-N-acetyl-alpha-D-glucosamine = [(1-&gt;4)-N-acetyl-beta-D-glucosaminyl](n+1) + UDP + H(+). With respect to regulation, activity is stimulated by Mg(2+), and is more inhibited by polyoxin D than by nikkomycin. Polymerizes chitin, a structural polymer of the cell wall and septum, by transferring the sugar moiety of UDP-GlcNAc to the non-reducing end of the growing chitin polymer. CHS4 synthesizes a large amount of chitin and appears to play a role in the process of cell separation. CHS4 is particularly well suited for functioning at the higher temperatures associated with its poorly characterized saprophic environment and with human infection. This Exophiala dermatitidis (strain ATCC 34100 / CBS 525.76 / NIH/UT8656) (Black yeast) protein is Chitin synthase 4.